The sequence spans 433 residues: Glutamate-1-semialdehyde 2,1-aminomutase (433 aa).

Residue Lys-273 is modified to N6-(pyridoxal phosphate)lysine.

Belongs to the class-III pyridoxal-phosphate-dependent aminotransferase family. HemL subfamily. In terms of assembly, homodimer. It depends on pyridoxal 5'-phosphate as a cofactor.

The protein localises to the cytoplasm. It carries out the reaction (S)-4-amino-5-oxopentanoate = 5-aminolevulinate. The protein operates within porphyrin-containing compound metabolism; protoporphyrin-IX biosynthesis; 5-aminolevulinate from L-glutamyl-tRNA(Glu): step 2/2. The sequence is that of Glutamate-1-semialdehyde 2,1-aminomutase from Ralstonia nicotianae (strain ATCC BAA-1114 / GMI1000) (Ralstonia solanacearum).